A 131-amino-acid polypeptide reads, in one-letter code: Methylglyoxal synthase (131 aa).

The 131-residue stretch at 1–131 (MKIALIAHDK…GDLDYRKLRK (131 aa)) folds into the MGS-like domain. Substrate contacts are provided by residues H8, K12, 34–37 (TGTT), and 54–55 (SG). D60 acts as the Proton donor/acceptor in catalysis. H87 provides a ligand contact to substrate.

The protein belongs to the methylglyoxal synthase family.

The catalysed reaction is dihydroxyacetone phosphate = methylglyoxal + phosphate. In terms of biological role, catalyzes the formation of methylglyoxal from dihydroxyacetone phosphate. In Bacillus cereus (strain ATCC 10987 / NRS 248), this protein is Methylglyoxal synthase.